Reading from the N-terminus, the 450-residue chain is Vacuolar cation/proton exchanger 1c (450 aa).

Residues 1–73 (MAPPESSHHH…LLGGPAAQLQ (73 aa)) lie on the Cytoplasmic side of the membrane. The tract at residues 28–52 (AAEEEEKKEAAAWTPSSSSSMTGRK) is disordered. The helical transmembrane segment at 74–94 (EVLLGTKLYPLFSAVPLAVAA) threads the bilayer. Residues 95–101 (ESLRLGR) are Extracellular-facing. A helical transmembrane segment spans residues 102–122 (VWVFAFSLIGLAPLAERVSFL). Over 123–134 (SEHIANTVGPTA) the chain is Cytoplasmic. A helical transmembrane segment spans residues 135–155 (GGIMNATCGNVPELIIALFAL). The interval 143–178 (GNVPELIIALFALHKNKMEILKWSLLGSILSNLLLV) is cation selection. The Extracellular portion of the chain corresponds to 156-170 (HKNKMEILKWSLLGS). The chain crosses the membrane as a helical span at residues 171–191 (ILSNLLLVLGSSLLFGGIVNI). The Cytoplasmic segment spans residues 192–201 (GKERPLDKRQ). Residues 202 to 222 (ADVSIGLLLLGVLCHIATLVS) traverse the membrane as a helical segment. Residues 223–239 (KYTSSTGDSINSSSVMQ) lie on the Extracellular side of the membrane. Residues 240-260 (LSRSCAIVMLIAYFGSLMFQL) form a helical membrane-spanning segment. Residues 261 to 287 (KTHRQIFELEEDSSDSSSSEDDATDKS) lie on the Cytoplasmic side of the membrane. A helical membrane pass occupies residues 288–308 (VIGFASAMVWLIGMAVVTAML). The Extracellular portion of the chain corresponds to 309-331 (SSYVVTTIEEASESMGIPVRFIS). A helical transmembrane segment spans residues 332–352 (IILLPIVGNAAEHAGAIIFAF). A cation selection region spans residues 339-374 (GNAAEHAGAIIFAFKNKIDISLGITLGSATQISMLV). Over 353–360 (KNKIDISL) the chain is Cytoplasmic. The helical transmembrane segment at 361–381 (GITLGSATQISMLVVPVILIV) threads the bilayer. The Extracellular portion of the chain corresponds to 382–385 (SWVN). The chain crosses the membrane as a helical span at residues 386-406 (AIPMDLDFNLLETGSLAMAVI). The Cytoplasmic segment spans residues 407 to 424 (TTAFTLQDDKWHYLKGLN). The helical transmembrane segment at 425-445 (LVFSYIVIAVCFFVMKALPTL) threads the bilayer. Topologically, residues 446 to 450 (KKEDD) are extracellular.

The protein belongs to the Ca(2+):cation antiporter (CaCA) (TC 2.A.19) family. Cation/proton exchanger (CAX) subfamily. Expressed in leaf blades.

The protein resides in the vacuole membrane. Its function is as follows. Vacuolar cation/proton exchanger (CAX). Translocates Ca(2+) and other metal ions into vacuoles using the proton gradient formed by H(+)-ATPase and H(+)-pyrophosphatase. In Oryza sativa subsp. japonica (Rice), this protein is Vacuolar cation/proton exchanger 1c (CAX1c).